The following is a 462-amino-acid chain: Gamma-aminobutyric acid receptor subunit alpha-5 (462 aa).

An N-terminal signal peptide occupies residues 1–31 (MDNGMFSSFIMIKNLLLFCISMNLASHFGFS). The Extracellular portion of the chain corresponds to 32-260 (QMPTSSVKAE…FHLKRKIGYF (229 aa)). The N-linked (GlcNAc...) asparagine glycan is linked to N45. R101 is a 4-aminobutanoate binding site. A glycan (N-linked (GlcNAc...) asparagine) is linked at N145. Residue T164 coordinates 4-aminobutanoate. Residues C173 and C187 are joined by a disulfide bond. Residues N207 and N236 are each glycosylated (N-linked (GlcNAc...) asparagine). Transmembrane regions (helical) follow at residues 261 to 281 (VIQTYLPCIMTVILSQVSFWL), 287 to 308 (PARTVFGVTTVLTMTTLSISAR), and 319 to 340 (AMDWFIAVCYAFVFSALIEFAT). Residues 341–427 (VNYFTKRGWA…TYNSISKIDK (87 aa)) lie on the Cytoplasmic side of the membrane. A Glycyl lysine isopeptide (Lys-Gly) (interchain with G-Cter in ubiquitin) cross-link involves residue K355. The segment at 375-412 (TNAYTTGKMTHPPNIPKEQTPAGTTNASSASVKPEDKA) is disordered. A compositionally biased stretch (polar residues) spans 395–405 (PAGTTNASSAS). Residues 428–448 (MSRIIFPLLFGTFNLVYWATY) form a helical membrane-spanning segment.

Belongs to the ligand-gated ion channel (TC 1.A.9) family. Gamma-aminobutyric acid receptor (TC 1.A.9.5) subfamily. GABRA5 sub-subfamily. As to quaternary structure, heteropentamer, formed by a combination of alpha (GABRA1-6), beta (GABRB1-3), gamma (GABRG1-3), delta (GABRD), epsilon (GABRE), rho (GABRR1-3), pi (GABRP) and theta (GABRQ) chains, each subunit exhibiting distinct physiological and pharmacological properties.

It is found in the postsynaptic cell membrane. Its subcellular location is the cell membrane. The catalysed reaction is chloride(in) = chloride(out). Its function is as follows. Alpha subunit of the heteropentameric ligand-gated chloride channel gated by gamma-aminobutyric acid (GABA), a major inhibitory neurotransmitter in the brain. GABA-gated chloride channels, also named GABA(A) receptors (GABAAR), consist of five subunits arranged around a central pore and contain GABA active binding site(s) located at the alpha and beta subunit interface(s). When activated by GABA, GABAARs selectively allow the flow of chloride anions across the cell membrane down their electrochemical gradient. GABAARs containing alpha-5/GABRA5 subunits are mainly extrasynaptic and contribute to the tonic GABAergic inhibition in the hippocampus. Extrasynaptic alpha-5-containing GABAARs in CA1 pyramidal neurons play a role in learning and memory processes. This Bos taurus (Bovine) protein is Gamma-aminobutyric acid receptor subunit alpha-5 (GABRA5).